We begin with the raw amino-acid sequence, 2642 residues long: Fusarielin synthase FSL1 (2642 aa).

In terms of domain architecture, Ketosynthase family 3 (KS3) spans 6–450 (NEPIAIIGTG…GTNAHAILEA (445 aa)). Residues cysteine 179, histidine 318, and histidine 370 each act as for beta-ketoacyl synthase activity in the active site. Residues 566-890 (VFTGQGAQWA…PYTSALVRGK (325 aa)) are malonyl-CoA:ACP transacylase (MAT) domain. Serine 659 acts as the For malonyltransferase activity in catalysis. Positions 965–1101 (HDLLGIQTAD…GKVCIFLQTE (137 aa)) are N-terminal hotdog fold. The segment at 965–1279 (HDLLGIQTAD…SFSPFAAATD (315 aa)) is dehydratase (DH) domain. One can recognise a PKS/mFAS DH domain in the interval 965–1280 (HDLLGIQTAD…FSPFAAATDR (316 aa)). Catalysis depends on histidine 997, which acts as the Proton acceptor; for dehydratase activity. Residues 1126 to 1280 (MAGIDVERFY…FSPFAAATDR (155 aa)) form a C-terminal hotdog fold region. The active-site Proton donor; for dehydratase activity is aspartate 1189. The segment at 1423–1622 (NYLDRYYTHA…GVDTNTPMPD (200 aa)) is methyltransferase (MET) domain. The interval 2244-2423 (TYWMLGLTGD…GHNAAVIDIS (180 aa)) is ketoreductase (KR) domain. The region spanning 2556 to 2635 (QEVTSVLTSC…DLADYILESL (80 aa)) is the Carrier domain. Position 2595 is an O-(pantetheine 4'-phosphoryl)serine (serine 2595).

The cofactor is pantetheine 4'-phosphate.

It participates in secondary metabolite biosynthesis. In terms of biological role, reducing polyketide synthase; part of the gene cluster that mediates the biosynthesis of fusarielins F, G and H, decaketide compounds with 5 methylations and a decaline core that act as mycoestrogens as they stimulate growth of MCF-7 breast cancer cells. The initial compound in the pathway is produced by the reducing polyketide synthase FSL1. FSL1 lacks an active enoyl reductase (ER) domain and biosynthesis of fusarielins relies on the trans-acting enoyl reductase FSL5, before it is released through hydrolysis catalyzed by the thioesterase FSL2. Fusarielins F, G, and H have a C11=C12 cis double bond and is fully reduced between C10 and C11 and between C12 and C13. FSL3 can be involved in the formation of the C11=C12 cis double bond by moving a hypothetical C10=C11 or C12=C13 trans double bond to form prefusarielin. Prefusarielin is oxygenated at C15 and C16 by the cytochrome P450 monooxygenase FSL4, resulting in fusarielin F, which subsequently is epoxidized into fusarielin G by the same enzyme. The final step in the pathway is a reduction of the carboxylic acid moiety to yield fusarielin H via a still undetermined mechanism. This is Fusarielin synthase FSL1 from Gibberella zeae (strain ATCC MYA-4620 / CBS 123657 / FGSC 9075 / NRRL 31084 / PH-1) (Wheat head blight fungus).